The chain runs to 217 residues: Protein GrpE (217 aa).

This sequence belongs to the GrpE family. As to quaternary structure, homodimer.

The protein localises to the cytoplasm. In terms of biological role, participates actively in the response to hyperosmotic and heat shock by preventing the aggregation of stress-denatured proteins, in association with DnaK and GrpE. It is the nucleotide exchange factor for DnaK and may function as a thermosensor. Unfolded proteins bind initially to DnaJ; upon interaction with the DnaJ-bound protein, DnaK hydrolyzes its bound ATP, resulting in the formation of a stable complex. GrpE releases ADP from DnaK; ATP binding to DnaK triggers the release of the substrate protein, thus completing the reaction cycle. Several rounds of ATP-dependent interactions between DnaJ, DnaK and GrpE are required for fully efficient folding. The chain is Protein GrpE from Mycoplasma pneumoniae (strain ATCC 29342 / M129 / Subtype 1) (Mycoplasmoides pneumoniae).